The sequence spans 365 residues: Peptide chain release factor 1 (365 aa).

Position 242 is an N5-methylglutamine (Gln242).

Belongs to the prokaryotic/mitochondrial release factor family. Post-translationally, methylated by PrmC. Methylation increases the termination efficiency of RF1.

Its subcellular location is the cytoplasm. In terms of biological role, peptide chain release factor 1 directs the termination of translation in response to the peptide chain termination codons UAG and UAA. This Fusobacterium nucleatum subsp. nucleatum (strain ATCC 25586 / DSM 15643 / BCRC 10681 / CIP 101130 / JCM 8532 / KCTC 2640 / LMG 13131 / VPI 4355) protein is Peptide chain release factor 1.